A 560-amino-acid chain; its full sequence is Chaperonin GroEL 2 (560 aa).

Residues 29–32 (TLGP), lysine 50, 86–90 (DGTTT), glycine 414, and aspartate 494 each bind ATP. A disordered region spans residues 524–546 (EDEDDDDGGGGGGGGMPAGGAGG). Over residues 532 to 546 (GGGGGGGMPAGGAGG) the composition is skewed to gly residues.

Belongs to the chaperonin (HSP60) family. As to quaternary structure, forms a cylinder of 14 subunits composed of two heptameric rings stacked back-to-back. Interacts with the co-chaperonin GroES.

It localises to the cytoplasm. It carries out the reaction ATP + H2O + a folded polypeptide = ADP + phosphate + an unfolded polypeptide.. Together with its co-chaperonin GroES, plays an essential role in assisting protein folding. The GroEL-GroES system forms a nano-cage that allows encapsulation of the non-native substrate proteins and provides a physical environment optimized to promote and accelerate protein folding. The protein is Chaperonin GroEL 2 of Salinibacter ruber (strain DSM 13855 / M31).